The primary structure comprises 396 residues: Acetate kinase (396 aa).

N7 serves as a coordination point for Mg(2+). K14 serves as a coordination point for ATP. Residue R88 participates in substrate binding. The active-site Proton donor/acceptor is D145. ATP-binding positions include H205–G209, D279–R281, and G327–N331. Position 381 (E381) interacts with Mg(2+).

This sequence belongs to the acetokinase family. In terms of assembly, homodimer. Mg(2+) serves as cofactor. Requires Mn(2+) as cofactor.

The protein localises to the cytoplasm. It carries out the reaction acetate + ATP = acetyl phosphate + ADP. Its pathway is metabolic intermediate biosynthesis; acetyl-CoA biosynthesis; acetyl-CoA from acetate: step 1/2. In terms of biological role, catalyzes the formation of acetyl phosphate from acetate and ATP. Can also catalyze the reverse reaction. The protein is Acetate kinase of Campylobacter jejuni (strain RM1221).